Consider the following 286-residue polypeptide: MSAKLINGKEIAAQVRQQVAAGVEARKQKGLRAPGLAVVLVGHDPASQVYVGNKRKACEQAGILSLSYDLPEDTSQAALEALVDELNENPAVDGILVQLPLPSHLDADPILVKIRPDKDVDGFHPYNIGRLMQRKPTLRPCTPAGVITLLDSIGTPYKGQHAVIVGASNIVGRPMSMELLLKGATTTVCHRFTDNLEKFVGEADILVAAVGKPGIIKGEWVKPGATVIDVGINRMDDGKLCGDVDFDAAAERAAYITPVPGGVGPMTIATLLENTLYAANVLHADT.

NADP(+)-binding positions include Gly166–Ser168 and Ile232.

The protein belongs to the tetrahydrofolate dehydrogenase/cyclohydrolase family. In terms of assembly, homodimer.

It catalyses the reaction (6R)-5,10-methylene-5,6,7,8-tetrahydrofolate + NADP(+) = (6R)-5,10-methenyltetrahydrofolate + NADPH. It carries out the reaction (6R)-5,10-methenyltetrahydrofolate + H2O = (6R)-10-formyltetrahydrofolate + H(+). It participates in one-carbon metabolism; tetrahydrofolate interconversion. Catalyzes the oxidation of 5,10-methylenetetrahydrofolate to 5,10-methenyltetrahydrofolate and then the hydrolysis of 5,10-methenyltetrahydrofolate to 10-formyltetrahydrofolate. The protein is Bifunctional protein FolD of Marinobacter nauticus (strain ATCC 700491 / DSM 11845 / VT8) (Marinobacter aquaeolei).